Here is a 121-residue protein sequence, read N- to C-terminus: Regulator of ribonuclease activity B (121 aa).

Belongs to the RraB family. As to quaternary structure, interacts with the C-terminal region of Rne.

It is found in the cytoplasm. Globally modulates RNA abundance by binding to RNase E (Rne) and regulating its endonucleolytic activity. Can modulate Rne action in a substrate-dependent manner by altering the composition of the degradosome. The sequence is that of Regulator of ribonuclease activity B from Psychromonas ingrahamii (strain DSM 17664 / CCUG 51855 / 37).